A 295-amino-acid polypeptide reads, in one-letter code: Pyridoxal 5'-phosphate synthase subunit PdxS (295 aa).

D25 provides a ligand contact to D-ribose 5-phosphate. K82 (schiff-base intermediate with D-ribose 5-phosphate) is an active-site residue. A D-ribose 5-phosphate-binding site is contributed by G154. Position 166 (R166) interacts with D-glyceraldehyde 3-phosphate. D-ribose 5-phosphate is bound by residues G215 and 236–237 (GS).

This sequence belongs to the PdxS/SNZ family. In the presence of PdxT, forms a dodecamer of heterodimers.

It catalyses the reaction aldehydo-D-ribose 5-phosphate + D-glyceraldehyde 3-phosphate + L-glutamine = pyridoxal 5'-phosphate + L-glutamate + phosphate + 3 H2O + H(+). Its pathway is cofactor biosynthesis; pyridoxal 5'-phosphate biosynthesis. Functionally, catalyzes the formation of pyridoxal 5'-phosphate from ribose 5-phosphate (RBP), glyceraldehyde 3-phosphate (G3P) and ammonia. The ammonia is provided by the PdxT subunit. Can also use ribulose 5-phosphate and dihydroxyacetone phosphate as substrates, resulting from enzyme-catalyzed isomerization of RBP and G3P, respectively. The polypeptide is Pyridoxal 5'-phosphate synthase subunit PdxS (Staphylococcus aureus (strain Mu3 / ATCC 700698)).